Reading from the N-terminus, the 83-residue chain is Small ribosomal subunit protein bS18A (83 aa).

The protein belongs to the bacterial ribosomal protein bS18 family. In terms of assembly, part of the 30S ribosomal subunit. Forms a tight heterodimer with protein bS6.

Its function is as follows. Binds as a heterodimer with protein bS6 to the central domain of the 16S rRNA, where it helps stabilize the platform of the 30S subunit. This chain is Small ribosomal subunit protein bS18A, found in Nocardia farcinica (strain IFM 10152).